The following is a 295-amino-acid chain: Aspartate carbamoyltransferase catalytic subunit (295 aa).

Carbamoyl phosphate is bound by residues R49 and T50. K77 provides a ligand contact to L-aspartate. Residues R99, H127, and Q130 each coordinate carbamoyl phosphate. L-aspartate is bound by residues R161 and R212. Positions 251 and 252 each coordinate carbamoyl phosphate.

Belongs to the aspartate/ornithine carbamoyltransferase superfamily. ATCase family. As to quaternary structure, heterododecamer (2C3:3R2) of six catalytic PyrB chains organized as two trimers (C3), and six regulatory PyrI chains organized as three dimers (R2).

The catalysed reaction is carbamoyl phosphate + L-aspartate = N-carbamoyl-L-aspartate + phosphate + H(+). The protein operates within pyrimidine metabolism; UMP biosynthesis via de novo pathway; (S)-dihydroorotate from bicarbonate: step 2/3. Its function is as follows. Catalyzes the condensation of carbamoyl phosphate and aspartate to form carbamoyl aspartate and inorganic phosphate, the committed step in the de novo pyrimidine nucleotide biosynthesis pathway. The sequence is that of Aspartate carbamoyltransferase catalytic subunit from Campylobacter jejuni (strain RM1221).